Here is a 234-residue protein sequence, read N- to C-terminus: UPF0758 protein Rfer_3252 (234 aa).

The 123-residue stretch at 112–234 folds into the MPN domain; it reads IFATPDAVKH…ALSMAERGLL (123 aa). 3 residues coordinate Zn(2+): H183, H185, and D196. The short motif at 183–196 is the JAMM motif element; that stretch reads HNHPSGTVQPSRAD.

The protein belongs to the UPF0758 family.

The polypeptide is UPF0758 protein Rfer_3252 (Albidiferax ferrireducens (strain ATCC BAA-621 / DSM 15236 / T118) (Rhodoferax ferrireducens)).